Reading from the N-terminus, the 625-residue chain is DNA mismatch repair protein MutL (625 aa).

The protein belongs to the DNA mismatch repair MutL/HexB family.

This protein is involved in the repair of mismatches in DNA. It is required for dam-dependent methyl-directed DNA mismatch repair. May act as a 'molecular matchmaker', a protein that promotes the formation of a stable complex between two or more DNA-binding proteins in an ATP-dependent manner without itself being part of a final effector complex. This Xanthomonas axonopodis pv. citri (strain 306) protein is DNA mismatch repair protein MutL.